Consider the following 519-residue polypeptide: Zinc finger protein 692 (519 aa).

The tract at residues 123–314 (GPSLSPTPSE…PAWDEDTAQI (192 aa)) is disordered. A compositionally biased stretch (polar residues) spans 145-155 (RSWCSEATSGQ). A Phosphoserine modification is found at Ser162. The segment covering 164–173 (HDERTQEARL) has biased composition (basic and acidic residues). The span at 177–187 (VGPPPETFPPP) shows a compositional bias: pro residues. Positions 188–206 (GEEEGEEEEDNDEDEEEML) are enriched in acidic residues. At Ser231 the chain carries Phosphoserine. Over residues 247-266 (AALSSPLAVPALSASSLSSR) the composition is skewed to low complexity. Positions 277–303 (PQLSRTPQAAQQTEALASTGSQAQSAP) are enriched in polar residues. 5 consecutive C2H2-type zinc fingers follow at residues 328–353 (MPCD…KYQH), 359–383 (FSCP…MKLH), 389–411 (YICE…RRIH), 417–439 (LQCE…QRKH), and 448–471 (FPCE…SKSH). Residues 469–519 (KSHPALLLAPQESPSGPLEPCPSISAPGPLGSSEGSRPSASPQAPTLLPQQ) are disordered. Ser470 bears the Phosphoserine; by AMPK mark. A compositionally biased stretch (polar residues) spans 501 to 519 (SEGSRPSASPQAPTLLPQQ).

It belongs to the krueppel C2H2-type zinc-finger protein family. Phosphorylation at Ser-470 results in loss of DNA-binding activity. In terms of tissue distribution, ubiquitous. Highly expressed in brain, thymus and spleen.

It localises to the nucleus. May act as an transcriptional repressor for PCK1 gene expression, in turn may participate in the hepatic gluconeogenesis regulation through the activated AMPK signaling pathway. This chain is Zinc finger protein 692 (ZNF692), found in Homo sapiens (Human).